The following is a 532-amino-acid chain: Probable bifunctional tRNA threonylcarbamoyladenosine biosynthesis protein (532 aa).

A kae1 region spans residues 1–323; the sequence is MRVLGVEGTA…FRPDEVSVTW (323 aa). Residues histidine 107 and histidine 111 each coordinate Fe cation. L-threonylcarbamoyladenylate-binding positions include 128–132, aspartate 160, glycine 173, glutamate 177, and asparagine 256; that span reads NASGA. Aspartate 284 is a Fe cation binding site. A Protein kinase domain is found at 329 to 532; that stretch reads PARDPGADAV…GRYQDDPETA (204 aa). ATP contacts are provided by residues 338–346 and lysine 355; that span reads VRQGAEATV. Residue aspartate 444 is the Proton acceptor; for kinase activity of the active site.

It in the N-terminal section; belongs to the KAE1 / TsaD family. The protein in the C-terminal section; belongs to the protein kinase superfamily. Tyr protein kinase family. BUD32 subfamily. Component of the KEOPS complex that consists of Kae1, Bud32, Cgi121 and Pcc1; the whole complex dimerizes. Fe(2+) is required as a cofactor.

It localises to the cytoplasm. It carries out the reaction L-seryl-[protein] + ATP = O-phospho-L-seryl-[protein] + ADP + H(+). It catalyses the reaction L-threonyl-[protein] + ATP = O-phospho-L-threonyl-[protein] + ADP + H(+). The catalysed reaction is L-threonylcarbamoyladenylate + adenosine(37) in tRNA = N(6)-L-threonylcarbamoyladenosine(37) in tRNA + AMP + H(+). Functionally, required for the formation of a threonylcarbamoyl group on adenosine at position 37 (t(6)A37) in tRNAs that read codons beginning with adenine. Is a component of the KEOPS complex that is probably involved in the transfer of the threonylcarbamoyl moiety of threonylcarbamoyl-AMP (TC-AMP) to the N6 group of A37. The Kae1 domain likely plays a direct catalytic role in this reaction. The Bud32 domain probably displays kinase activity that regulates Kae1 function. This Halobacterium salinarum (strain ATCC 700922 / JCM 11081 / NRC-1) (Halobacterium halobium) protein is Probable bifunctional tRNA threonylcarbamoyladenosine biosynthesis protein.